Consider the following 490-residue polypeptide: 23S rRNA (uracil(1939)-C(5))-methyltransferase RlmD (490 aa).

Positions 14-75 (APAPAEYPID…SSFEKATLTA (62 aa)) constitute a TRAM domain. The [4Fe-4S] cluster site is built by Cys88, Cys98, Cys101, and Cys180. The S-adenosyl-L-methionine site is built by Gln289, Phe318, Asn323, Glu339, Asn374, and Asp395. The active-site Nucleophile is the Cys446.

Belongs to the class I-like SAM-binding methyltransferase superfamily. RNA M5U methyltransferase family. RlmD subfamily.

It carries out the reaction uridine(1939) in 23S rRNA + S-adenosyl-L-methionine = 5-methyluridine(1939) in 23S rRNA + S-adenosyl-L-homocysteine + H(+). Catalyzes the formation of 5-methyl-uridine at position 1939 (m5U1939) in 23S rRNA. This chain is 23S rRNA (uracil(1939)-C(5))-methyltransferase RlmD, found in Polaromonas naphthalenivorans (strain CJ2).